Here is a 297-residue protein sequence, read N- to C-terminus: Adrenocorticotropic hormone receptor (297 aa).

The Extracellular portion of the chain corresponds to 1–23 (MKHIIHASGNVNGTARNNSDCPH). N-linked (GlcNAc...) asparagine glycans are attached at residues Asn12 and Asn17. 2 disulfide bridges follow: Cys21–Cys253 and Cys245–Cys251. The helical transmembrane segment at 24-49 (VALPEEIFFIISITGVLENLIIILAV) threads the bilayer. Topologically, residues 50–58 (IKNKNLQFP) are cytoplasmic. Residues 59 to 79 (MYFFICSLAISDMLGSLYKIL) form a helical membrane-spanning segment. The Extracellular segment spans residues 80–104 (ESILIMFRNMGYFKPHGSFETTTDD). The chain crosses the membrane as a helical span at residues 105 to 126 (IIDTMFILSLLGSIFSLLAIAV). The Cytoplasmic segment spans residues 127–147 (DRYITIFHALQYHSIVTMHRT). A helical transmembrane segment spans residues 148-168 (IAVLSIIWTFCIGSGITMVLF). At 169–180 (SHHVPTVLTFTS) the chain is on the extracellular side. A helical transmembrane segment spans residues 181 to 199 (LFPLMLVFILCLYVHMFLM). Over 200–217 (ARSHARNISTLPRGNMRG) the chain is Cytoplasmic. A helical transmembrane segment spans residues 218–244 (AITLTILLGVFIFCWAPFILHILLVTF). Residues 245–256 (CPNNPYCTCYIS) lie on the Extracellular side of the membrane. A helical membrane pass occupies residues 257-278 (LFHVNGMLIMCNAVIDPFIYAF). Over 279-297 (RSPELRSAFRRMISYSKCL) the chain is Cytoplasmic. Cys296 carries the S-palmitoyl cysteine lipid modification.

It belongs to the G-protein coupled receptor 1 family. In terms of assembly, homodimer. Interacts with corticotropin (ACTH). Interacts with MRAP; this interaction targets MC2R to the plasma membrane. Interacts with MRAP2; competing with MRAP for binding to MC2R and impairing the binding of corticotropin (ACTH). Post-translationally, ubiquitinated by MGRN1 that may be involved in post-endocytic trafficking and/or degradation of internalized receptor.

Its subcellular location is the cell membrane. In terms of biological role, hormone receptor primarily expressed in adrenal cortex that plays a key role in regulating adrenocortical function. Upon corticotropin (ACTH) binding, facilitates the release of adrenal glucocorticoids, including cortisol and corticosterone. In addition, MC2R is required for fetal and neonatal adrenal gland development. Mechanistically, activates adenylate cyclase (cAMP), the MAPK cascade as well as the cAMP-dependent protein kinase A pathway leading to steroidogenic factor 1/NR5A1-mediated transcriptional activation. This chain is Adrenocorticotropic hormone receptor (MC2R), found in Cavia porcellus (Guinea pig).